The primary structure comprises 180 residues: UPF0134 protein MPN_127 (180 aa).

Belongs to the UPF0134 family.

This chain is UPF0134 protein MPN_127, found in Mycoplasma pneumoniae (strain ATCC 29342 / M129 / Subtype 1) (Mycoplasmoides pneumoniae).